We begin with the raw amino-acid sequence, 235 residues long: tRNA pseudouridine synthase B (235 aa).

The Nucleophile role is filled by Asp45.

This sequence belongs to the pseudouridine synthase TruB family. Type 1 subfamily.

It carries out the reaction uridine(55) in tRNA = pseudouridine(55) in tRNA. Responsible for synthesis of pseudouridine from uracil-55 in the psi GC loop of transfer RNAs. This chain is tRNA pseudouridine synthase B, found in Chlamydia felis (strain Fe/C-56) (Chlamydophila felis).